The following is a 120-amino-acid chain: Large ribosomal subunit protein bL19c (120 aa).

The protein belongs to the bacterial ribosomal protein bL19 family.

The protein localises to the plastid. The protein resides in the chloroplast. The protein is Large ribosomal subunit protein bL19c of Thalassiosira weissflogii (Marine diatom).